The chain runs to 230 residues: 2,3-bisphosphoglycerate-dependent phosphoglycerate mutase (230 aa).

Substrate is bound by residues 8-15, 21-22, R60, 87-90, K98, 114-115, and 183-184; these read RHGESEWN, TG, ERHY, RR, and GN. H9 functions as the Tele-phosphohistidine intermediate in the catalytic mechanism. Residue E87 is the Proton donor/acceptor of the active site.

Belongs to the phosphoglycerate mutase family. BPG-dependent PGAM subfamily.

The catalysed reaction is (2R)-2-phosphoglycerate = (2R)-3-phosphoglycerate. Its pathway is carbohydrate degradation; glycolysis; pyruvate from D-glyceraldehyde 3-phosphate: step 3/5. Its function is as follows. Catalyzes the interconversion of 2-phosphoglycerate and 3-phosphoglycerate. This chain is 2,3-bisphosphoglycerate-dependent phosphoglycerate mutase, found in Streptococcus pneumoniae (strain P1031).